Reading from the N-terminus, the 367-residue chain is Phosphoribosylaminoimidazole-succinocarboxamide synthase (367 aa).

The protein belongs to the SAICAR synthetase family.

It carries out the reaction 5-amino-1-(5-phospho-D-ribosyl)imidazole-4-carboxylate + L-aspartate + ATP = (2S)-2-[5-amino-1-(5-phospho-beta-D-ribosyl)imidazole-4-carboxamido]succinate + ADP + phosphate + 2 H(+). It participates in purine metabolism; IMP biosynthesis via de novo pathway; 5-amino-1-(5-phospho-D-ribosyl)imidazole-4-carboxamide from 5-amino-1-(5-phospho-D-ribosyl)imidazole-4-carboxylate: step 1/2. The polypeptide is Phosphoribosylaminoimidazole-succinocarboxamide synthase (Psychromonas ingrahamii (strain DSM 17664 / CCUG 51855 / 37)).